A 273-amino-acid polypeptide reads, in one-letter code: Rhamnulose-1-phosphate aldolase (273 aa).

Glu-117 is a catalytic residue. His-140, His-142, and His-211 together coordinate Zn(2+).

The protein belongs to the aldolase class II family. RhaD subfamily. The cofactor is Zn(2+).

The protein localises to the cytoplasm. The enzyme catalyses L-rhamnulose 1-phosphate = (S)-lactaldehyde + dihydroxyacetone phosphate. The protein operates within carbohydrate degradation; L-rhamnose degradation; glycerone phosphate from L-rhamnose: step 3/3. Functionally, catalyzes the reversible cleavage of L-rhamnulose-1-phosphate to dihydroxyacetone phosphate (DHAP) and L-lactaldehyde. This chain is Rhamnulose-1-phosphate aldolase, found in Listeria monocytogenes serotype 4b (strain CLIP80459).